A 109-amino-acid polypeptide reads, in one-letter code: MKCLFGFLFIMLVAFLQDVHGVDSCIGKPCKVKGEDMKDIKEKKIEDIKEEIKNVKKEIFEDVDDELLDDNIRDDKIRDAKPSLRRVHWTRIRPGIPAVIKIGSSIGKK.

An N-terminal signal peptide occupies residues Met-1–Gly-21. A propeptide spanning residues Val-22–Ile-77 is cleaved from the precursor. Ile-106 carries the post-translational modification Isoleucine amide.

Belongs to the arminin family. As to expression, expressed in the ectodermal epithelium.

It localises to the secreted. It is found in the target cell membrane. In terms of biological role, antimicrobial peptide with a broad-spectrum antimicrobial activity. Keeps its antibacterial activity under a wide range of salt concentrations that mimic physiological conditions of human blood, which is surprising, since Hydra is an obligate freshwater animal with nearly no salt tolerance. Does not affect red blood cells. This is Arminin 6560 from Hydra vulgaris (Hydra).